The following is a 129-amino-acid chain: UPF0212 protein Mbar_A2902 (129 aa).

The protein belongs to the UPF0212 family.

This chain is UPF0212 protein Mbar_A2902, found in Methanosarcina barkeri (strain Fusaro / DSM 804).